The sequence spans 86 residues: Small ribosomal subunit protein uS17 (86 aa).

Belongs to the universal ribosomal protein uS17 family. Part of the 30S ribosomal subunit.

Functionally, one of the primary rRNA binding proteins, it binds specifically to the 5'-end of 16S ribosomal RNA. The sequence is that of Small ribosomal subunit protein uS17 from Streptococcus gordonii (strain Challis / ATCC 35105 / BCRC 15272 / CH1 / DL1 / V288).